Consider the following 325-residue polypeptide: NADH-quinone oxidoreductase subunit H (325 aa).

The next 8 membrane-spanning stretches (helical) occupy residues 11–31, 81–101, 114–134, 149–169, 186–206, 237–257, 265–285, and 304–324; these read ILIS…CGAF, VIFT…FAIV, IGIL…LFAG, ASAQ…GVVA, MWNV…GVAV, FFVG…TLFF, LPPF…FILI, and VCLP…LYNA.

This sequence belongs to the complex I subunit 1 family. As to quaternary structure, NDH-1 is composed of 13 different subunits. Subunits NuoA, H, J, K, L, M, N constitute the membrane sector of the complex.

Its subcellular location is the cell inner membrane. It catalyses the reaction a quinone + NADH + 5 H(+)(in) = a quinol + NAD(+) + 4 H(+)(out). NDH-1 shuttles electrons from NADH, via FMN and iron-sulfur (Fe-S) centers, to quinones in the respiratory chain. The immediate electron acceptor for the enzyme in this species is believed to be ubiquinone. Couples the redox reaction to proton translocation (for every two electrons transferred, four hydrogen ions are translocated across the cytoplasmic membrane), and thus conserves the redox energy in a proton gradient. This subunit may bind ubiquinone. This Serratia proteamaculans (strain 568) protein is NADH-quinone oxidoreductase subunit H.